The chain runs to 89 residues: Small ribosomal subunit protein uS15c (89 aa).

It belongs to the universal ribosomal protein uS15 family. As to quaternary structure, part of the 30S ribosomal subunit.

It localises to the plastid. It is found in the chloroplast. The protein is Small ribosomal subunit protein uS15c (rps15) of Chloranthus spicatus (Chulantree).